Reading from the N-terminus, the 309-residue chain is Oxidoreductase NAD-binding domain-containing protein 1 (309 aa).

An N-terminal signal peptide occupies residues 1–14 (MVVVIPRLLRGSLG). One can recognise an FAD-binding FR-type domain in the interval 47 to 161 (HLERTADVVR…VGGEFFFDPK (115 aa)). Residue 175–180 (GVGINP) coordinates NAD(+).

The protein is Oxidoreductase NAD-binding domain-containing protein 1 (OXNAD1) of Bos taurus (Bovine).